The sequence spans 289 residues: 4-diphosphocytidyl-2-C-methyl-D-erythritol kinase (289 aa).

Lys-10 is an active-site residue. Position 95–105 (95–105 (PVSAGMGGGSA)) interacts with ATP. Asp-137 is an active-site residue.

Belongs to the GHMP kinase family. IspE subfamily.

It carries out the reaction 4-CDP-2-C-methyl-D-erythritol + ATP = 4-CDP-2-C-methyl-D-erythritol 2-phosphate + ADP + H(+). It functions in the pathway isoprenoid biosynthesis; isopentenyl diphosphate biosynthesis via DXP pathway; isopentenyl diphosphate from 1-deoxy-D-xylulose 5-phosphate: step 3/6. Catalyzes the phosphorylation of the position 2 hydroxy group of 4-diphosphocytidyl-2C-methyl-D-erythritol. This chain is 4-diphosphocytidyl-2-C-methyl-D-erythritol kinase, found in Ligilactobacillus salivarius (strain UCC118) (Lactobacillus salivarius).